We begin with the raw amino-acid sequence, 393 residues long: Formate-dependent phosphoribosylglycinamide formyltransferase (393 aa).

N(1)-(5-phospho-beta-D-ribosyl)glycinamide-binding positions include 22–23 (EL) and Glu-82. ATP-binding positions include Arg-114, Lys-155, 160 to 165 (SSGKGQ), 195 to 198 (EGFI), and Glu-203. One can recognise an ATP-grasp domain in the interval 119-308 (RLAAEELGLP…EFALHARAIL (190 aa)). Mg(2+)-binding residues include Glu-267 and Glu-279. N(1)-(5-phospho-beta-D-ribosyl)glycinamide is bound by residues Asp-286, Lys-356, and 363-364 (RR).

The protein belongs to the PurK/PurT family. In terms of assembly, homodimer.

It carries out the reaction N(1)-(5-phospho-beta-D-ribosyl)glycinamide + formate + ATP = N(2)-formyl-N(1)-(5-phospho-beta-D-ribosyl)glycinamide + ADP + phosphate + H(+). The protein operates within purine metabolism; IMP biosynthesis via de novo pathway; N(2)-formyl-N(1)-(5-phospho-D-ribosyl)glycinamide from N(1)-(5-phospho-D-ribosyl)glycinamide (formate route): step 1/1. In terms of biological role, involved in the de novo purine biosynthesis. Catalyzes the transfer of formate to 5-phospho-ribosyl-glycinamide (GAR), producing 5-phospho-ribosyl-N-formylglycinamide (FGAR). Formate is provided by PurU via hydrolysis of 10-formyl-tetrahydrofolate. The chain is Formate-dependent phosphoribosylglycinamide formyltransferase from Pseudomonas aeruginosa (strain LESB58).